The primary structure comprises 84 residues: Trefoil factor 1 (84 aa).

An N-terminal signal peptide occupies residues 1–24; that stretch reads MATMENKVICALVLVSMLALGTLA. Residues 29 to 72 form the P-type domain; it reads ETCTVAPRERQNCGFPGVTPSQCANKGCCFDDTVRGVPWCFYPN. Cystine bridges form between Cys-31-Cys-57, Cys-41-Cys-56, and Cys-51-Cys-68.

As to quaternary structure, heterodimer with GKN2; disulfide linked. In terms of tissue distribution, found in stomach, with highest levels in the upper gastric mucosal cells (at protein level). Detected in goblet cells of the small and large intestine and rectum, small submucosal glands in the esophagus, mucous acini of the sublingual gland, submucosal glands of the trachea, and epithelial cells lining the exocrine pancreatic ducts but not in the remainder of the pancreas (at protein level). Scattered expression is detected in the epithelial cells of the gallbladder and submucosal glands of the vagina, and weak expression is observed in the bronchial goblet cells of the pseudostratified epithelia in the respiratory system (at protein level). Detected in urine (at protein level). Strongly expressed in breast cancer but at low levels in normal mammary tissue. It is regulated by estrogen in MCF-7 cells. Strong expression found in normal gastric mucosa and in the regenerative tissues surrounding ulcerous lesions of gastrointestinal tract, but lower expression found in gastric cancer (at protein level).

Its subcellular location is the secreted. In terms of biological role, stabilizer of the mucous gel overlying the gastrointestinal mucosa that provides a physical barrier against various noxious agents. May inhibit the growth of calcium oxalate crystals in urine. The protein is Trefoil factor 1 (TFF1) of Homo sapiens (Human).